Reading from the N-terminus, the 122-residue chain is Large ribosomal subunit protein eL22B (122 aa).

Belongs to the eukaryotic ribosomal protein eL22 family. Component of the large ribosomal subunit (LSU). Mature yeast ribosomes consist of a small (40S) and a large (60S) subunit. The 40S small subunit contains 1 molecule of ribosomal RNA (18S rRNA) and 33 different proteins (encoded by 57 genes). The large 60S subunit contains 3 rRNA molecules (25S, 5.8S and 5S rRNA) and 46 different proteins (encoded by 81 genes).

It localises to the cytoplasm. In terms of biological role, component of the ribosome, a large ribonucleoprotein complex responsible for the synthesis of proteins in the cell. The small ribosomal subunit (SSU) binds messenger RNAs (mRNAs) and translates the encoded message by selecting cognate aminoacyl-transfer RNA (tRNA) molecules. The large subunit (LSU) contains the ribosomal catalytic site termed the peptidyl transferase center (PTC), which catalyzes the formation of peptide bonds, thereby polymerizing the amino acids delivered by tRNAs into a polypeptide chain. The nascent polypeptides leave the ribosome through a tunnel in the LSU and interact with protein factors that function in enzymatic processing, targeting, and the membrane insertion of nascent chains at the exit of the ribosomal tunnel. The chain is Large ribosomal subunit protein eL22B from Saccharomyces cerevisiae (strain ATCC 204508 / S288c) (Baker's yeast).